An 884-amino-acid polypeptide reads, in one-letter code: E3 ubiquitin-protein ligase BRE1-like 1 (884 aa).

Residues 1–37 (MGSTGEPDRKRRLSSSVAPGGGAPVSPAKRLAVAPTS) are disordered. The stretch at 49 to 86 (YKNQKLSEQLEAHKFEYRALENKFAGLKEKQRTHNETL) forms a coiled coil. Positions 107-127 (KSGSPNSSPGSGHNNVQKDGT) are disordered. Positions 108–121 (SGSPNSSPGSGHNN) are enriched in low complexity. Coiled coils occupy residues 216–541 (LNNV…ELKL), 580–663 (SKLE…LQQI), 696–762 (RNLQ…QSLD), and 789–827 (KKRI…KEYR). Residues 832–871 (CGICHDRQKEVVITKCYHLFCNQCIQKSLGNRQRRCPSCS) form an RING-type zinc finger.

It belongs to the BRE1 family.

The protein resides in the nucleus. It carries out the reaction S-ubiquitinyl-[E2 ubiquitin-conjugating enzyme]-L-cysteine + [acceptor protein]-L-lysine = [E2 ubiquitin-conjugating enzyme]-L-cysteine + N(6)-ubiquitinyl-[acceptor protein]-L-lysine.. It participates in protein modification; protein ubiquitination. E3 ubiquitin-protein ligase that monoubiquitinates H2B to form H2BK143ub1. H2BK143ub1 gives a specific tag for epigenetic transcriptional activation and is also prerequisite for H3K4me and maybe H3K79me. It thereby plays a central role in histone code and gene regulation. Forms a ubiquitin ligase complex in cooperation with the E2 enzyme UBC2/RAD6. The protein is E3 ubiquitin-protein ligase BRE1-like 1 (BRE1A) of Oryza sativa subsp. indica (Rice).